The chain runs to 1151 residues: Elicitor of plant defense protein 1 (1151 aa).

Disordered regions lie at residues 22–130, 178–197, and 236–255; these read YQDP…TLGE, ERIR…RSIK, and NYNS…DMHP. The segment covering 39–49 has biased composition (acidic residues); it reads IIEDGEPEDEW. The span at 64-99 shows a compositional bias: polar residues; that stretch reads QNSASRLSKMSLTERFSIQTLDDTDGNTKSNRSSAT. The span at 104–122 shows a compositional bias: low complexity; it reads NPPDFSNGNDDSNGNSQNP. The segment covering 178-187 has biased composition (basic and acidic residues); sequence ERIRAEESDS. A uDENN domain is found at 242 to 500; sequence PPPEPLNTDP…NLCTEAFNPL (259 aa). One can recognise a cDENN domain in the interval 524 to 656; that stretch reads EIPGSRTIDI…ARRKLMSLLQ (133 aa). The 362-residue stretch at 658–1019 folds into the dDENN domain; sequence AAPHKLRYGV…DREMQPANDA (362 aa). Polar residues-rich tracts occupy residues 695 to 711 and 744 to 760; these read STPK…SSSG and TSKS…SPVS. The tract at residues 695-809 is disordered; that stretch reads STPKSTLGKW…SSSFGVDKHP (115 aa). Over residues 784–798 the composition is skewed to basic and acidic residues; sequence LREKRSGHFGEEKMR. The Phorbol-ester/DAG-type zinc-finger motif lies at 886 to 934; the sequence is GHCFNYMPKDNTSMCTICNDLAEGDGVYRCTGCKIVSHGRCLGYCSLIC.

Belongs to the EPD1 elicitor family.

Its subcellular location is the secreted. It is found in the host cell. Acts as an elicitor that triggers cell death and defense responses in the host plants. This is Elicitor of plant defense protein 1 from Gibberella zeae (strain ATCC MYA-4620 / CBS 123657 / FGSC 9075 / NRRL 31084 / PH-1) (Wheat head blight fungus).